Consider the following 95-residue polypeptide: Aspartyl/glutamyl-tRNA(Asn/Gln) amidotransferase subunit C (95 aa).

This sequence belongs to the GatC family. Heterotrimer of A, B and C subunits.

It catalyses the reaction L-glutamyl-tRNA(Gln) + L-glutamine + ATP + H2O = L-glutaminyl-tRNA(Gln) + L-glutamate + ADP + phosphate + H(+). The catalysed reaction is L-aspartyl-tRNA(Asn) + L-glutamine + ATP + H2O = L-asparaginyl-tRNA(Asn) + L-glutamate + ADP + phosphate + 2 H(+). Functionally, allows the formation of correctly charged Asn-tRNA(Asn) or Gln-tRNA(Gln) through the transamidation of misacylated Asp-tRNA(Asn) or Glu-tRNA(Gln) in organisms which lack either or both of asparaginyl-tRNA or glutaminyl-tRNA synthetases. The reaction takes place in the presence of glutamine and ATP through an activated phospho-Asp-tRNA(Asn) or phospho-Glu-tRNA(Gln). This is Aspartyl/glutamyl-tRNA(Asn/Gln) amidotransferase subunit C from Rhodopseudomonas palustris (strain BisA53).